The chain runs to 54 residues: Ovomucoid (54 aa).

In terms of domain architecture, Kazal-like spans 4-54; the sequence is VDCSEYPKPACTLEYRPLCGSDSKTYGNKCNFCNAVVESNGTLTLSHFGKC. 3 disulfides stabilise this stretch: C6–C36, C14–C33, and C22–C54. N43 carries N-linked (GlcNAc...) asparagine glycosylation.

It is found in the secreted. The protein is Ovomucoid of Alectoris chukar (Chukar partridge).